The sequence spans 326 residues: DNA-directed RNA polymerase subunit alpha (326 aa).

Positions methionine 1–glutamate 232 are alpha N-terminal domain (alpha-NTD). Positions phenylalanine 246–glutamate 326 are alpha C-terminal domain (alpha-CTD).

Belongs to the RNA polymerase alpha chain family. As to quaternary structure, homodimer. The RNAP catalytic core consists of 2 alpha, 1 beta, 1 beta' and 1 omega subunit. When a sigma factor is associated with the core the holoenzyme is formed, which can initiate transcription.

The catalysed reaction is RNA(n) + a ribonucleoside 5'-triphosphate = RNA(n+1) + diphosphate. DNA-dependent RNA polymerase catalyzes the transcription of DNA into RNA using the four ribonucleoside triphosphates as substrates. This Vesicomyosocius okutanii subsp. Calyptogena okutanii (strain HA) protein is DNA-directed RNA polymerase subunit alpha.